The sequence spans 126 residues: UPF0102 protein Mlg_2205 (126 aa).

The protein belongs to the UPF0102 family.

This Alkalilimnicola ehrlichii (strain ATCC BAA-1101 / DSM 17681 / MLHE-1) protein is UPF0102 protein Mlg_2205.